The following is a 517-amino-acid chain: 2-isopropylmalate synthase (517 aa).

Residues valine 7 to valine 269 form the Pyruvate carboxyltransferase domain. Positions 16, 204, 206, and 240 each coordinate Mn(2+). Residues lysine 395–isoleucine 517 are regulatory domain.

This sequence belongs to the alpha-IPM synthase/homocitrate synthase family. LeuA type 1 subfamily. Homodimer. Requires Mn(2+) as cofactor.

It is found in the cytoplasm. It carries out the reaction 3-methyl-2-oxobutanoate + acetyl-CoA + H2O = (2S)-2-isopropylmalate + CoA + H(+). It participates in amino-acid biosynthesis; L-leucine biosynthesis; L-leucine from 3-methyl-2-oxobutanoate: step 1/4. Its function is as follows. Catalyzes the condensation of the acetyl group of acetyl-CoA with 3-methyl-2-oxobutanoate (2-ketoisovalerate) to form 3-carboxy-3-hydroxy-4-methylpentanoate (2-isopropylmalate). The sequence is that of 2-isopropylmalate synthase from Neisseria meningitidis serogroup A / serotype 4A (strain DSM 15465 / Z2491).